Consider the following 444-residue polypeptide: L-seryl-tRNA(Sec) selenium transferase (444 aa).

The residue at position 284 (Lys-284) is an N6-(pyridoxal phosphate)lysine.

This sequence belongs to the SelA family. Requires pyridoxal 5'-phosphate as cofactor.

Its subcellular location is the cytoplasm. The enzyme catalyses L-seryl-tRNA(Sec) + selenophosphate + H(+) = L-selenocysteinyl-tRNA(Sec) + phosphate. The protein operates within aminoacyl-tRNA biosynthesis; selenocysteinyl-tRNA(Sec) biosynthesis; selenocysteinyl-tRNA(Sec) from L-seryl-tRNA(Sec) (bacterial route): step 1/1. Functionally, converts seryl-tRNA(Sec) to selenocysteinyl-tRNA(Sec) required for selenoprotein biosynthesis. The polypeptide is L-seryl-tRNA(Sec) selenium transferase (Wolinella succinogenes (strain ATCC 29543 / DSM 1740 / CCUG 13145 / JCM 31913 / LMG 7466 / NCTC 11488 / FDC 602W) (Vibrio succinogenes)).